The primary structure comprises 611 residues: DNA mismatch repair protein MutL (611 aa).

Belongs to the DNA mismatch repair MutL/HexB family.

In terms of biological role, this protein is involved in the repair of mismatches in DNA. It is required for dam-dependent methyl-directed DNA mismatch repair. May act as a 'molecular matchmaker', a protein that promotes the formation of a stable complex between two or more DNA-binding proteins in an ATP-dependent manner without itself being part of a final effector complex. This Borrelia garinii subsp. bavariensis (strain ATCC BAA-2496 / DSM 23469 / PBi) (Borreliella bavariensis) protein is DNA mismatch repair protein MutL.